We begin with the raw amino-acid sequence, 217 residues long: MPCALEHIHTRYLGEQPYEPTWTAMRTFTEERSSETRDELWLLQHPPVYTLGQAGRPEHILDTGETPVVHTDRGGQVTWHGPGQLVAYPLLDLRRWGLGVRTLVHALEQSVVSLLAAYGVPSHRREDAPGVYVDGAKVAALGIRVRRGCSYHGLSLNVCNDPAPFERIHPCGYAGLTTTRVHDLGITTPLDRLEVELGIYLLQAIDAASRASRHDRA.

A BPL/LPL catalytic domain is found at 34 to 216; that stretch reads SETRDELWLL…AASRASRHDR (183 aa). Residues 73–80, 140–142, and 153–155 contribute to the substrate site; these read RGGQVTWH, ALG, and GLS. Cysteine 171 serves as the catalytic Acyl-thioester intermediate.

It belongs to the LipB family.

The protein localises to the cytoplasm. The catalysed reaction is octanoyl-[ACP] + L-lysyl-[protein] = N(6)-octanoyl-L-lysyl-[protein] + holo-[ACP] + H(+). It functions in the pathway protein modification; protein lipoylation via endogenous pathway; protein N(6)-(lipoyl)lysine from octanoyl-[acyl-carrier-protein]: step 1/2. In terms of biological role, catalyzes the transfer of endogenously produced octanoic acid from octanoyl-acyl-carrier-protein onto the lipoyl domains of lipoate-dependent enzymes. Lipoyl-ACP can also act as a substrate although octanoyl-ACP is likely to be the physiological substrate. This chain is Octanoyltransferase, found in Halorhodospira halophila (strain DSM 244 / SL1) (Ectothiorhodospira halophila (strain DSM 244 / SL1)).